We begin with the raw amino-acid sequence, 201 residues long: Potassium-transporting ATPase KdpC subunit (201 aa).

The helical transmembrane segment at 7-27 (PAIVLLLVLTAITGLAYPLAM) threads the bilayer.

It belongs to the KdpC family. In terms of assembly, the system is composed of three essential subunits: KdpA, KdpB and KdpC.

The protein localises to the cell inner membrane. In terms of biological role, part of the high-affinity ATP-driven potassium transport (or Kdp) system, which catalyzes the hydrolysis of ATP coupled with the electrogenic transport of potassium into the cytoplasm. This subunit acts as a catalytic chaperone that increases the ATP-binding affinity of the ATP-hydrolyzing subunit KdpB by the formation of a transient KdpB/KdpC/ATP ternary complex. This is Potassium-transporting ATPase KdpC subunit from Bradyrhizobium diazoefficiens (strain JCM 10833 / BCRC 13528 / IAM 13628 / NBRC 14792 / USDA 110).